Reading from the N-terminus, the 285-residue chain is Bifunctional protein FolD (285 aa).

NADP(+) contacts are provided by residues 165–167, Ser190, and Ile231; that span reads GRS.

The protein belongs to the tetrahydrofolate dehydrogenase/cyclohydrolase family. As to quaternary structure, homodimer.

It catalyses the reaction (6R)-5,10-methylene-5,6,7,8-tetrahydrofolate + NADP(+) = (6R)-5,10-methenyltetrahydrofolate + NADPH. The enzyme catalyses (6R)-5,10-methenyltetrahydrofolate + H2O = (6R)-10-formyltetrahydrofolate + H(+). It participates in one-carbon metabolism; tetrahydrofolate interconversion. In terms of biological role, catalyzes the oxidation of 5,10-methylenetetrahydrofolate to 5,10-methenyltetrahydrofolate and then the hydrolysis of 5,10-methenyltetrahydrofolate to 10-formyltetrahydrofolate. The polypeptide is Bifunctional protein FolD (Verminephrobacter eiseniae (strain EF01-2)).